We begin with the raw amino-acid sequence, 88 residues long: UPF0297 protein SPCG_0205 (88 aa).

Belongs to the UPF0297 family.

In Streptococcus pneumoniae (strain CGSP14), this protein is UPF0297 protein SPCG_0205.